We begin with the raw amino-acid sequence, 312 residues long: GATA transcription factor 6 (312 aa).

Disordered stretches follow at residues 1–33, 56–77, and 136–186; these read MESVELTLKNSNMKDKTLTGGAQNGDDFSVDDL, QRKRGVSDENTLHRSNDFSTAD, and KSQH…PLWL. The span at 56 to 71 shows a compositional bias: basic and acidic residues; it reads QRKRGVSDENTLHRSN. A compositionally biased stretch (basic residues) spans 142–151; the sequence is VKTRPKRART. Residues 143–150 carry the Nuclear localization signal motif; sequence KTRPKRAR. Positions 157–186 are enriched in low complexity; that stretch reads SHGSQSLTDSSSSSTTSSSSSPRPSSPLWL. The GATA-type zinc-finger motif lies at 217–271; sequence QTQTRQCGHCGVQKTPQWRAGPLGAKTLCNACGVRYKSGRLLPEYRPACSPTFSS.

This sequence belongs to the type IV zinc-finger family. Class A subfamily.

The protein localises to the nucleus. Transcriptional activator that specifically binds 5'-GATA-3' or 5'-GAT-3' motifs within gene promoters. May be involved in the regulation of some light-responsive genes. The sequence is that of GATA transcription factor 6 (GATA6) from Arabidopsis thaliana (Mouse-ear cress).